A 469-amino-acid chain; its full sequence is Tubulin gamma-2 chain (469 aa).

Position 142 to 148 (142 to 148 (AGGTGSG)) interacts with GTP.

Belongs to the tubulin family.

The protein localises to the cytoplasm. It is found in the cytoskeleton. It localises to the microtubule organizing center. Tubulin is the major constituent of microtubules. The gamma chain is found at microtubule organizing centers (MTOC) such as the spindle poles, suggesting that it is involved in the minus-end nucleation of microtubule assembly. This is Tubulin gamma-2 chain (TUBG2) from Oryza sativa subsp. japonica (Rice).